Here is a 257-residue protein sequence, read N- to C-terminus: Protein orai-2 (257 aa).

Transmembrane regions (helical) follow at residues 67–84, 95–115, 149–169, and 199–219; these read TSALLSGFAMVAMVEVQL, LIAFSACTTVLVAVHLFALLI, LAWGFSTVLGILLFLAEVVLL, and AALVSTIIMVPVGLIFVVFTI.

This sequence belongs to the Orai family.

The protein localises to the membrane. Ca(2+) release-activated Ca(2+)-like (CRAC-like) channel subunit which mediates Ca(2+) influx and increase in Ca(2+)-selective current by synergy with the Ca(2+) sensor, STIM1. The polypeptide is Protein orai-2 (ORAI2) (Gallus gallus (Chicken)).